Here is a 381-residue protein sequence, read N- to C-terminus: Methanesulfonate monooxygenase (381 aa).

The protein belongs to the SsuD family.

The enzyme catalyses an alkanesulfonate + FMNH2 + O2 = an aldehyde + FMN + sulfite + H2O + 2 H(+). Catalyzes the desulfonation of aliphatic sulfonates. Shows highest activity with methanesulfonate. This is Methanesulfonate monooxygenase (msuD) from Pseudomonas aeruginosa (strain ATCC 15692 / DSM 22644 / CIP 104116 / JCM 14847 / LMG 12228 / 1C / PRS 101 / PAO1).